The sequence spans 86 residues: Putative membrane protein insertion efficiency factor (86 aa).

It belongs to the UPF0161 family.

The protein resides in the cell membrane. Its function is as follows. Could be involved in insertion of integral membrane proteins into the membrane. The polypeptide is Putative membrane protein insertion efficiency factor (Streptococcus pyogenes serotype M1).